The sequence spans 457 residues: Phosphoglucosamine mutase (457 aa).

The Phosphoserine intermediate role is filled by Ser-103. Residues Ser-103, Asp-245, Asp-247, and Asp-249 each coordinate Mg(2+). Ser-103 carries the post-translational modification Phosphoserine.

The protein belongs to the phosphohexose mutase family. It depends on Mg(2+) as a cofactor. Post-translationally, activated by phosphorylation.

The catalysed reaction is alpha-D-glucosamine 1-phosphate = D-glucosamine 6-phosphate. Its function is as follows. Catalyzes the conversion of glucosamine-6-phosphate to glucosamine-1-phosphate. This is Phosphoglucosamine mutase from Syntrophotalea carbinolica (strain DSM 2380 / NBRC 103641 / GraBd1) (Pelobacter carbinolicus).